Here is a 312-residue protein sequence, read N- to C-terminus: DNA primase small subunit PriS (312 aa).

Catalysis depends on residues aspartate 88, aspartate 90, and aspartate 215.

Belongs to the eukaryotic-type primase small subunit family. In terms of assembly, heterodimer of a small subunit (PriS) and a large subunit (PriL). Requires Mg(2+) as cofactor. The cofactor is Mn(2+).

Functionally, catalytic subunit of DNA primase, an RNA polymerase that catalyzes the synthesis of short RNA molecules used as primers for DNA polymerase during DNA replication. The small subunit contains the primase catalytic core and has DNA synthesis activity on its own. Binding to the large subunit stabilizes and modulates the activity, increasing the rate of DNA synthesis while decreasing the length of the DNA fragments, and conferring RNA synthesis capability. The DNA polymerase activity may enable DNA primase to also catalyze primer extension after primer synthesis. May also play a role in DNA repair. The sequence is that of DNA primase small subunit PriS from Pyrobaculum aerophilum (strain ATCC 51768 / DSM 7523 / JCM 9630 / CIP 104966 / NBRC 100827 / IM2).